The following is a 305-amino-acid chain: Protein FdhE homolog (305 aa).

The protein belongs to the FdhE family.

The protein localises to the cytoplasm. Functionally, necessary for formate dehydrogenase activity. The protein is Protein FdhE homolog of Haemophilus ducreyi (strain 35000HP / ATCC 700724).